The primary structure comprises 97 residues: MTDLRHYDVIVSPAITEKSTMASEQNQVVFNVAKKASKPEIKAAVEALFGVKVMAVNTLVRKGKIKRFRGTIGRQSDVKKAIVTLADGQSIDVATGL.

This sequence belongs to the universal ribosomal protein uL23 family. Part of the 50S ribosomal subunit. Contacts protein L29, and trigger factor when it is bound to the ribosome.

Its function is as follows. One of the early assembly proteins it binds 23S rRNA. One of the proteins that surrounds the polypeptide exit tunnel on the outside of the ribosome. Forms the main docking site for trigger factor binding to the ribosome. This Mesorhizobium japonicum (strain LMG 29417 / CECT 9101 / MAFF 303099) (Mesorhizobium loti (strain MAFF 303099)) protein is Large ribosomal subunit protein uL23.